Reading from the N-terminus, the 238-residue chain is Ribonuclease PH (238 aa).

Residues R86 and 124–126 (GTR) contribute to the phosphate site.

It belongs to the RNase PH family. Homohexameric ring arranged as a trimer of dimers.

It catalyses the reaction tRNA(n+1) + phosphate = tRNA(n) + a ribonucleoside 5'-diphosphate. Its function is as follows. Phosphorolytic 3'-5' exoribonuclease that plays an important role in tRNA 3'-end maturation. Removes nucleotide residues following the 3'-CCA terminus of tRNAs; can also add nucleotides to the ends of RNA molecules by using nucleoside diphosphates as substrates, but this may not be physiologically important. Probably plays a role in initiation of 16S rRNA degradation (leading to ribosome degradation) during starvation. This chain is Ribonuclease PH, found in Dichelobacter nodosus (strain VCS1703A).